The primary structure comprises 257 residues: S-methyl-5'-thioadenosine phosphorylase (257 aa).

Phosphate contacts are provided by residues serine 10 and 50–51; that span reads RH. Methionine 180 provides a ligand contact to substrate. A phosphate-binding site is contributed by threonine 181. 204–206 contacts substrate; sequence DYD.

This sequence belongs to the PNP/MTAP phosphorylase family. MTAP subfamily. In terms of assembly, homohexamer. Dimer of a homotrimer.

It catalyses the reaction S-methyl-5'-thioadenosine + phosphate = 5-(methylsulfanyl)-alpha-D-ribose 1-phosphate + adenine. Its pathway is amino-acid biosynthesis; L-methionine biosynthesis via salvage pathway; S-methyl-5-thio-alpha-D-ribose 1-phosphate from S-methyl-5'-thioadenosine (phosphorylase route): step 1/1. Its function is as follows. Catalyzes the reversible phosphorylation of S-methyl-5'-thioadenosine (MTA) to adenine and 5-methylthioribose-1-phosphate. Involved in the breakdown of MTA, a major by-product of polyamine biosynthesis. Responsible for the first step in the methionine salvage pathway after MTA has been generated from S-adenosylmethionine. Has broad substrate specificity with 6-aminopurine nucleosides as preferred substrates. This chain is S-methyl-5'-thioadenosine phosphorylase (mntP), found in Pyrococcus abyssi (strain GE5 / Orsay).